The chain runs to 402 residues: Succinylornithine transaminase (402 aa).

K252 bears the N6-(pyridoxal phosphate)lysine mark.

This sequence belongs to the class-III pyridoxal-phosphate-dependent aminotransferase family. AstC subfamily. Pyridoxal 5'-phosphate is required as a cofactor.

It carries out the reaction N(2)-succinyl-L-ornithine + 2-oxoglutarate = N-succinyl-L-glutamate 5-semialdehyde + L-glutamate. It participates in amino-acid degradation; L-arginine degradation via AST pathway; L-glutamate and succinate from L-arginine: step 3/5. Catalyzes the transamination of N(2)-succinylornithine and alpha-ketoglutarate into N(2)-succinylglutamate semialdehyde and glutamate. Can also act as an acetylornithine aminotransferase. The protein is Succinylornithine transaminase of Photorhabdus laumondii subsp. laumondii (strain DSM 15139 / CIP 105565 / TT01) (Photorhabdus luminescens subsp. laumondii).